Reading from the N-terminus, the 328-residue chain is Flap endonuclease 1 (328 aa).

The tract at residues 1 to 98 (MGVKLRDVVS…ETVSRRADIR (98 aa)) is N-domain. Residues Asp-27, Asp-80, Glu-152, Glu-154, Asp-173, Asp-175, and Asp-226 each coordinate Mg(2+). Residues 116-247 (RAKKYAVRSS…RGLKLIREKG (132 aa)) form an I-domain region. Residues 320-328 (TQKSLEDWF) are interaction with PCNA.

This sequence belongs to the XPG/RAD2 endonuclease family. FEN1 subfamily. Interacts with PCNA. PCNA stimulates the nuclease activity without altering cleavage specificity. Mg(2+) is required as a cofactor.

In terms of biological role, structure-specific nuclease with 5'-flap endonuclease and 5'-3' exonuclease activities involved in DNA replication and repair. During DNA replication, cleaves the 5'-overhanging flap structure that is generated by displacement synthesis when DNA polymerase encounters the 5'-end of a downstream Okazaki fragment. Binds the unpaired 3'-DNA end and kinks the DNA to facilitate 5' cleavage specificity. Cleaves one nucleotide into the double-stranded DNA from the junction in flap DNA, leaving a nick for ligation. Also involved in the base excision repair (BER) pathway. Acts as a genome stabilization factor that prevents flaps from equilibrating into structures that lead to duplications and deletions. Also possesses 5'-3' exonuclease activity on nicked or gapped double-stranded DNA. In Methanothermobacter thermautotrophicus (strain ATCC 29096 / DSM 1053 / JCM 10044 / NBRC 100330 / Delta H) (Methanobacterium thermoautotrophicum), this protein is Flap endonuclease 1.